The sequence spans 204 residues: Small ribosomal subunit protein uS4 (204 aa).

An S4 RNA-binding domain is found at Ser-93–Glu-156.

The protein belongs to the universal ribosomal protein uS4 family. Part of the 30S ribosomal subunit. Contacts protein S5. The interaction surface between S4 and S5 is involved in control of translational fidelity.

Functionally, one of the primary rRNA binding proteins, it binds directly to 16S rRNA where it nucleates assembly of the body of the 30S subunit. With S5 and S12 plays an important role in translational accuracy. This Wolbachia pipientis wMel protein is Small ribosomal subunit protein uS4.